The sequence spans 236 residues: Purine nucleoside phosphorylase DeoD-type (236 aa).

Position 5 (H5) interacts with a purine D-ribonucleoside. Residues G21, R25, R44, and 88-91 each bind phosphate; that span reads RIGS. A purine D-ribonucleoside is bound by residues 180-182 and 204-205; these read EME and SD. D205 serves as the catalytic Proton donor.

Belongs to the PNP/UDP phosphorylase family. In terms of assembly, homohexamer; trimer of homodimers.

It catalyses the reaction a purine D-ribonucleoside + phosphate = a purine nucleobase + alpha-D-ribose 1-phosphate. It carries out the reaction a purine 2'-deoxy-D-ribonucleoside + phosphate = a purine nucleobase + 2-deoxy-alpha-D-ribose 1-phosphate. Catalyzes the reversible phosphorolytic breakdown of the N-glycosidic bond in the beta-(deoxy)ribonucleoside molecules, with the formation of the corresponding free purine bases and pentose-1-phosphate. The polypeptide is Purine nucleoside phosphorylase DeoD-type (Hahella chejuensis (strain KCTC 2396)).